Consider the following 330-residue polypeptide: D-lactate dehydrogenase (330 aa).

NAD(+) contacts are provided by residues Arg-155 to Ile-156, Asp-175, Met-206 to Pro-207, Asn-212, Met-233 to Arg-235, and Asp-259. Arg-235 is a catalytic residue. Glu-264 is an active-site residue. His-296 acts as the Proton donor in catalysis.

Belongs to the D-isomer specific 2-hydroxyacid dehydrogenase family.

It catalyses the reaction (R)-lactate + NAD(+) = pyruvate + NADH + H(+). The protein is D-lactate dehydrogenase (ldhD) of Streptococcus pyogenes serotype M1.